Consider the following 352-residue polypeptide: 3-isopropylmalate dehydrogenase (352 aa).

76–89 (GYKWENLPHDKKPE) serves as a coordination point for NAD(+). Substrate contacts are provided by Arg96, Arg106, Arg134, and Asp220. Mg(2+) contacts are provided by Asp220, Asp244, and Asp248. 277-289 (GSAPDIAGQNKAN) is a binding site for NAD(+).

It belongs to the isocitrate and isopropylmalate dehydrogenases family. LeuB type 1 subfamily. Homodimer. Mg(2+) is required as a cofactor. Mn(2+) serves as cofactor.

Its subcellular location is the cytoplasm. It catalyses the reaction (2R,3S)-3-isopropylmalate + NAD(+) = 4-methyl-2-oxopentanoate + CO2 + NADH. It functions in the pathway amino-acid biosynthesis; L-leucine biosynthesis; L-leucine from 3-methyl-2-oxobutanoate: step 3/4. Its function is as follows. Catalyzes the oxidation of 3-carboxy-2-hydroxy-4-methylpentanoate (3-isopropylmalate) to 3-carboxy-4-methyl-2-oxopentanoate. The product decarboxylates to 4-methyl-2 oxopentanoate. The sequence is that of 3-isopropylmalate dehydrogenase from Chlorobaculum tepidum (strain ATCC 49652 / DSM 12025 / NBRC 103806 / TLS) (Chlorobium tepidum).